Consider the following 23-residue polypeptide: HLLQFNKMIKFETGKNAIPFYAF.

Requires Ca(2+) as cofactor. In terms of processing, contains 7 disulfide bonds. Expressed by the venom gland.

It is found in the secreted. It carries out the reaction a 1,2-diacyl-sn-glycero-3-phosphocholine + H2O = a 1-acyl-sn-glycero-3-phosphocholine + a fatty acid + H(+). In terms of biological role, snake venom phospholipase A2 (PLA2) that shows presynaptic neurotoxicity. PLA2 catalyzes the calcium-dependent hydrolysis of the 2-acyl groups in 3-sn-phosphoglycerides. This is Phospholipase A2 crotoxin basic chain 3 from Crotalus durissus terrificus (South American rattlesnake).